A 275-amino-acid polypeptide reads, in one-letter code: Putative phosphoenolpyruvate synthase regulatory protein (275 aa).

157–164 (GVSRCGKT) provides a ligand contact to ADP.

This sequence belongs to the pyruvate, phosphate/water dikinase regulatory protein family. PSRP subfamily.

It catalyses the reaction [pyruvate, water dikinase] + ADP = [pyruvate, water dikinase]-phosphate + AMP + H(+). It carries out the reaction [pyruvate, water dikinase]-phosphate + phosphate + H(+) = [pyruvate, water dikinase] + diphosphate. Bifunctional serine/threonine kinase and phosphorylase involved in the regulation of the phosphoenolpyruvate synthase (PEPS) by catalyzing its phosphorylation/dephosphorylation. This Bordetella bronchiseptica (strain ATCC BAA-588 / NCTC 13252 / RB50) (Alcaligenes bronchisepticus) protein is Putative phosphoenolpyruvate synthase regulatory protein.